Reading from the N-terminus, the 503-residue chain is DnaJ homolog subfamily C member 3 (503 aa).

The first 31 residues, 1-31 (MVSAAASAGRLGSALPFLLVLLDLQYQGAEC), serve as a signal peptide directing secretion. 9 TPR repeats span residues 37 to 70 (VEKQ…DSDN), 71 to 104 (YIAY…KQDF), 105 to 137 (TSRL…NPSN), 153 to 186 (LQRL…CVWD), 187 to 220 (AELR…KSDN), 221 to 254 (TEAF…DQDH), 267 to 300 (LNKQ…EPDV), 305 to 338 (TRAK…EPTN), and 339 to 372 (VNAL…SEND). A disulfide bridge links Cys-247 with Cys-257. Cys-312 and Cys-328 form a disulfide bridge. The interval 374–392 (QIREGLERAQRMLKQSQKR) is flexible linker. A J domain is found at 393–461 (DYYKILGVKR…EMRRKFDAGE (69 aa)).

Its subcellular location is the endoplasmic reticulum. Functionally, may be involved in the unfolded protein response (UPR) during ER stress. The polypeptide is DnaJ homolog subfamily C member 3 (DNAJC3) (Gallus gallus (Chicken)).